Here is a 150-residue protein sequence, read N- to C-terminus: Peptidoglycan-associated lipoprotein (150 aa).

An N-terminal signal peptide occupies residues 1-19 (MKKLTKVLLVAGSVAVLAA). C20 carries the N-palmitoyl cysteine lipid modification. C20 carries S-diacylglycerol cysteine lipidation. One can recognise an OmpA-like domain in the interval 37 to 150 (SVQDLQQRYN…SKNRRAVLAY (114 aa)).

This sequence belongs to the Pal lipoprotein family. As to quaternary structure, the Tol-Pal system is composed of five core proteins: the inner membrane proteins TolA, TolQ and TolR, the periplasmic protein TolB and the outer membrane protein Pal. They form a network linking the inner and outer membranes and the peptidoglycan layer.

Its subcellular location is the cell outer membrane. Functionally, part of the Tol-Pal system, which plays a role in outer membrane invagination during cell division and is important for maintaining outer membrane integrity. This chain is Peptidoglycan-associated lipoprotein, found in Pasteurella multocida (strain Pm70).